Consider the following 367-residue polypeptide: tRNA-specific 2-thiouridylase MnmA (367 aa).

Residues 7-14 (AMSGGVDS) and Met33 each bind ATP. Cys108 acts as the Nucleophile in catalysis. A disulfide bridge connects residues Cys108 and Cys200. Gly132 contributes to the ATP binding site. The interaction with tRNA stretch occupies residues 150 to 152 (KDQ). Cys200 serves as the catalytic Cysteine persulfide intermediate. Positions 301-302 (RY) are interaction with tRNA.

The protein belongs to the MnmA/TRMU family.

The protein resides in the cytoplasm. It carries out the reaction S-sulfanyl-L-cysteinyl-[protein] + uridine(34) in tRNA + AH2 + ATP = 2-thiouridine(34) in tRNA + L-cysteinyl-[protein] + A + AMP + diphosphate + H(+). Catalyzes the 2-thiolation of uridine at the wobble position (U34) of tRNA, leading to the formation of s(2)U34. The polypeptide is tRNA-specific 2-thiouridylase MnmA (Thermus thermophilus (strain ATCC BAA-163 / DSM 7039 / HB27)).